The following is a 407-amino-acid chain: Leucine-rich repeat-containing protein 42 (407 aa).

LRR repeat units lie at residues 138–159 (VLKS…EEIR), 163–184 (SLEC…FKYI), 191–211 (SLVK…QRLT), 223–243 (NLQL…RYLT), and 247–268 (TLQK…KGFF). The interval 360–389 (VQSSPSGETHSTHKSRKRRLSTEEEQSAAP) is disordered.

This sequence belongs to the LRRC42 family.

This Danio rerio (Zebrafish) protein is Leucine-rich repeat-containing protein 42 (lrrc42).